The chain runs to 224 residues: MEAYKKEFIEFMIECGVLTFGDFVTKSGRNTPFFVNTGNYKTGSQLKRLGEYYAEAIKANYKDDYNIVFGPAYKGIPLSVTVTMALSDKYGIDVSYCSNRKEIKDHGDTGILLGSKLNDGDKVLIVEDVTTSGKSIYETMPIIKEQGNVDVVGLVISVNRMEKGQGEKSALVELEEKYGFKSCAIVTMTEVVKYLYNKEVNGKVIINDEVKTRIDEYYKEYGAK.

5-phospho-alpha-D-ribose 1-diphosphate contacts are provided by residues Lys26, 73 to 74, Arg100, Lys101, Lys104, His106, and 127 to 135; these read YK and EDVTTSGKS. Orotate contacts are provided by Thr131 and Arg160.

Belongs to the purine/pyrimidine phosphoribosyltransferase family. PyrE subfamily. Homodimer. Requires Mg(2+) as cofactor.

The enzyme catalyses orotidine 5'-phosphate + diphosphate = orotate + 5-phospho-alpha-D-ribose 1-diphosphate. It participates in pyrimidine metabolism; UMP biosynthesis via de novo pathway; UMP from orotate: step 1/2. Functionally, catalyzes the transfer of a ribosyl phosphate group from 5-phosphoribose 1-diphosphate to orotate, leading to the formation of orotidine monophosphate (OMP). This is Orotate phosphoribosyltransferase from Clostridium botulinum (strain Eklund 17B / Type B).